A 251-amino-acid chain; its full sequence is Uroporphyrinogen-III C-methyltransferase (251 aa).

Residues proline 17, 93 to 95 (GGD), 123 to 124 (TS), methionine 177, and alanine 206 contribute to the S-adenosyl-L-homocysteine site.

It belongs to the precorrin methyltransferase family.

It localises to the plastid. The protein resides in the chloroplast. The enzyme catalyses uroporphyrinogen III + 2 S-adenosyl-L-methionine = precorrin-2 + 2 S-adenosyl-L-homocysteine + H(+). Its pathway is cofactor biosynthesis; adenosylcobalamin biosynthesis; precorrin-2 from uroporphyrinogen III: step 1/1. It functions in the pathway porphyrin-containing compound metabolism; siroheme biosynthesis; precorrin-2 from uroporphyrinogen III: step 1/1. Functionally, catalyzes the two successive C-2 and C-7 methylation reactions involved in the conversion of uroporphyrinogen III to precorrin-2 via the intermediate formation of precorrin-1. It is a step in the biosynthesis of both cobalamin (vitamin B12) and siroheme. This Cyanidium caldarium (Red alga) protein is Uroporphyrinogen-III C-methyltransferase (cobA).